Here is an 872-residue protein sequence, read N- to C-terminus: Protein translocase subunit SecA (872 aa).

Residues Gln-87, 105-109 (GEGKT), and Asp-510 each bind ATP. 4 residues coordinate Zn(2+): Cys-847, Cys-849, Cys-858, and Cys-859.

It belongs to the SecA family. Monomer and homodimer. Part of the essential Sec protein translocation apparatus which comprises SecA, SecYEG and auxiliary proteins SecDF-YajC and YidC. Zn(2+) serves as cofactor.

It localises to the cell inner membrane. Its subcellular location is the cytoplasm. The enzyme catalyses ATP + H2O + cellular proteinSide 1 = ADP + phosphate + cellular proteinSide 2.. In terms of biological role, part of the Sec protein translocase complex. Interacts with the SecYEG preprotein conducting channel. Has a central role in coupling the hydrolysis of ATP to the transfer of proteins into and across the cell membrane, serving as an ATP-driven molecular motor driving the stepwise translocation of polypeptide chains across the membrane. This Aliarcobacter butzleri (strain RM4018) (Arcobacter butzleri) protein is Protein translocase subunit SecA.